The primary structure comprises 81 residues: MTDLFSSPDHTLDALGLRCPEPVMMVRKTVRNMQPGETLLIIADDPATTRDIPGFCTFMEHELVAKETDGLPYRYLIRKGG.

C19 acts as the Cysteine persulfide intermediate in catalysis.

It belongs to the sulfur carrier protein TusA family. Interacts with IscS.

The protein localises to the cytoplasm. It participates in tRNA modification. Sulfur carrier protein involved in sulfur trafficking in the cell. Part of a sulfur-relay system required for 2-thiolation during synthesis of 2-thiouridine of the modified wobble base 5-methylaminomethyl-2-thiouridine (mnm(5)s(2)U) in tRNA. Interacts with IscS and stimulates its cysteine desulfurase activity. Accepts an activated sulfur from IscS, which is then transferred to TusD, and thus determines the direction of sulfur flow from IscS to 2-thiouridine formation. Also appears to be involved in sulfur transfer for the biosynthesis of molybdopterin. This is Sulfur carrier protein TusA from Shigella boydii serotype 18 (strain CDC 3083-94 / BS512).